A 70-amino-acid polypeptide reads, in one-letter code: Cytochrome c oxidase subunit 8B, mitochondrial (70 aa).

Residues 1 to 24 (MPRLPPILRLLQAPEKYTVIPKAR) constitute a mitochondrion transit peptide. Topologically, residues 25–35 (ISSKPAKSPTS) are mitochondrial matrix. The chain crosses the membrane as a helical span at residues 36–59 (AMDQAVGMSVIIAGFMVPAGWVLS). The Mitochondrial intermembrane segment spans residues 60–70 (HLESYKRSSAA).

Belongs to the cytochrome c oxidase VIII family. Component of the cytochrome c oxidase (complex IV, CIV), a multisubunit enzyme composed of 14 subunits. The complex is composed of a catalytic core of 3 subunits MT-CO1, MT-CO2 and MT-CO3, encoded in the mitochondrial DNA, and 11 supernumerary subunits COX4I, COX5A, COX5B, COX6A, COX6B, COX6C, COX7A, COX7B, COX7C, COX8 and NDUFA4, which are encoded in the nuclear genome. The complex exists as a monomer or a dimer and forms supercomplexes (SCs) in the inner mitochondrial membrane with NADH-ubiquinone oxidoreductase (complex I, CI) and ubiquinol-cytochrome c oxidoreductase (cytochrome b-c1 complex, complex III, CIII), resulting in different assemblies (supercomplex SCI(1)III(2)IV(1) and megacomplex MCI(2)III(2)IV(2)).

The protein resides in the mitochondrion inner membrane. It functions in the pathway energy metabolism; oxidative phosphorylation. Functionally, component of the cytochrome c oxidase, the last enzyme in the mitochondrial electron transport chain which drives oxidative phosphorylation. The respiratory chain contains 3 multisubunit complexes succinate dehydrogenase (complex II, CII), ubiquinol-cytochrome c oxidoreductase (cytochrome b-c1 complex, complex III, CIII) and cytochrome c oxidase (complex IV, CIV), that cooperate to transfer electrons derived from NADH and succinate to molecular oxygen, creating an electrochemical gradient over the inner membrane that drives transmembrane transport and the ATP synthase. Cytochrome c oxidase is the component of the respiratory chain that catalyzes the reduction of oxygen to water. Electrons originating from reduced cytochrome c in the intermembrane space (IMS) are transferred via the dinuclear copper A center (CU(A)) of subunit 2 and heme A of subunit 1 to the active site in subunit 1, a binuclear center (BNC) formed by heme A3 and copper B (CU(B)). The BNC reduces molecular oxygen to 2 water molecules using 4 electrons from cytochrome c in the IMS and 4 protons from the mitochondrial matrix. The polypeptide is Cytochrome c oxidase subunit 8B, mitochondrial (Cox8b) (Rattus norvegicus (Rat)).